Here is an 875-residue protein sequence, read N- to C-terminus: ATP-dependent helicase Lhr-Core (875 aa).

ATP-binding residues include glutamine 35, lysine 58, threonine 59, aspartate 173, glutamate 174, isoleucine 355, arginine 372, and histidine 375. A Helicase ATP-binding domain is found at 39-230 (IPLIKQNYNV…FLVGKDREYR (192 aa)). The DEIH box signature appears at 173 to 176 (DEIH). A Helicase C-terminal domain is found at 247-419 (PVKDLVHSSE…SIHIPKNPLD (173 aa)). The tract at residues 420–506 (VLSQIIVSAS…IFYTNSGTIP (87 aa)) is WH domain. Residues 507–875 (DEAMISVVTE…VNIELEYTSV (369 aa)) are domain 4.

The protein belongs to the Lhr helicase family. Lhr-Core subfamily. As to quaternary structure, monomer and homodimer. The monomeric form has helicase, ATPase and strand annealing activities, while the dimeric form only has ATPAse and strand annealing activities. Interacts with DNA topoisomerase 3 (topA).

The catalysed reaction is Couples ATP hydrolysis with the unwinding of duplex DNA by translocating in the 3'-5' direction.. It catalyses the reaction ATP + H2O = ADP + phosphate + H(+). Its activity is regulated as follows. DNA topoisomerase 3 (topA) inhibits helicase activity on Holliday junctions (HJ) but has no effect on ATPase activity. Its function is as follows. DNA helicase that translocates in a 3'-5' direction on single-stranded (ss)DNA, probably involved in DNA repair. Unwinds DNA in a 3'-5' direction, unwinding is ATP-dependent, acts preferentially on fork and 3'-tailed DNA; bubble and blunt-ended double-stranded (ds)DNA are not substrates. Has winding and unwinding activity, unwinds Holliday junction (HJ) DNA in the presence of ATP, the main product is forked DNA, single-stranded binding protein (SSB) does not stimulate activity. Anneals complementary oligonucleotides in an ATP-independent manner to form HJ and fork structures, thus can perform strand exchange. Preferentially binds HJ, forked and ssDNA, dsDNA is bound less well. LhrC-Core (Hel112) inhibits the exonuclease activity of the HerA-NurA complex on ss- and dsDNA, has no effect on ssDNA nicking by NurA; HerA-NurA are involved in DNA end-resection during DNA double-strand break repair. The protein is ATP-dependent helicase Lhr-Core of Saccharolobus solfataricus (strain ATCC 35092 / DSM 1617 / JCM 11322 / P2) (Sulfolobus solfataricus).